A 195-amino-acid polypeptide reads, in one-letter code: ATP-dependent Clp protease proteolytic subunit (195 aa).

Ser-98 functions as the Nucleophile in the catalytic mechanism. His-123 is an active-site residue.

It belongs to the peptidase S14 family. As to quaternary structure, fourteen ClpP subunits assemble into 2 heptameric rings which stack back to back to give a disk-like structure with a central cavity, resembling the structure of eukaryotic proteasomes.

The protein localises to the cytoplasm. The enzyme catalyses Hydrolysis of proteins to small peptides in the presence of ATP and magnesium. alpha-casein is the usual test substrate. In the absence of ATP, only oligopeptides shorter than five residues are hydrolyzed (such as succinyl-Leu-Tyr-|-NHMec, and Leu-Tyr-Leu-|-Tyr-Trp, in which cleavage of the -Tyr-|-Leu- and -Tyr-|-Trp bonds also occurs).. Functionally, cleaves peptides in various proteins in a process that requires ATP hydrolysis. Has a chymotrypsin-like activity. Plays a major role in the degradation of misfolded proteins. The polypeptide is ATP-dependent Clp protease proteolytic subunit (Wolinella succinogenes (strain ATCC 29543 / DSM 1740 / CCUG 13145 / JCM 31913 / LMG 7466 / NCTC 11488 / FDC 602W) (Vibrio succinogenes)).